Reading from the N-terminus, the 535-residue chain is Peroxisomal membrane protein PEX29 (535 aa).

2 consecutive transmembrane segments (helical) span residues 139 to 159 (LSVP…SKPL) and 176 to 196 (ILLL…PAYM). A glycan (N-linked (GlcNAc...) asparagine) is linked at Asn239. The chain crosses the membrane as a helical span at residues 247 to 267 (MLLYVMSYDFVTSLIVKYLYF). Asn271 carries N-linked (GlcNAc...) asparagine glycosylation. The next 2 membrane-spanning stretches (helical) occupy residues 272-292 (ITIF…LFGA) and 297-317 (AMLP…TIAM). N-linked (GlcNAc...) asparagine glycosylation is found at Asn450 and Asn515. Positions 511–535 (AHRRNKSMESSNSLHPVKSIDSVDG) are disordered.

This sequence belongs to the PEX28-32 family. PEX29 subfamily.

It is found in the endoplasmic reticulum membrane. In terms of biological role, with PEX23, contributes to the formation of endoplasmic reticulum-mitochondria junctions which are important for mitochondrial function. Involved in lipid dropplets formation. This Ogataea parapolymorpha (strain ATCC 26012 / BCRC 20466 / JCM 22074 / NRRL Y-7560 / DL-1) (Yeast) protein is Peroxisomal membrane protein PEX29.